A 177-amino-acid polypeptide reads, in one-letter code: Large ribosomal subunit protein uL6 (177 aa).

This sequence belongs to the universal ribosomal protein uL6 family. Part of the 50S ribosomal subunit.

In terms of biological role, this protein binds to the 23S rRNA, and is important in its secondary structure. It is located near the subunit interface in the base of the L7/L12 stalk, and near the tRNA binding site of the peptidyltransferase center. This chain is Large ribosomal subunit protein uL6, found in Rickettsia akari (strain Hartford).